A 562-amino-acid polypeptide reads, in one-letter code: Arginine--tRNA ligase (562 aa).

The short motif at 136-146 (ANPTGPMHMGN) is the 'HIGH' region element.

This sequence belongs to the class-I aminoacyl-tRNA synthetase family. In terms of assembly, monomer.

It is found in the cytoplasm. The catalysed reaction is tRNA(Arg) + L-arginine + ATP = L-arginyl-tRNA(Arg) + AMP + diphosphate. This chain is Arginine--tRNA ligase (argS), found in Caldanaerobacter subterraneus subsp. tengcongensis (strain DSM 15242 / JCM 11007 / NBRC 100824 / MB4) (Thermoanaerobacter tengcongensis).